Consider the following 798-residue polypeptide: Copalyl diphosphate synthase 1, chloroplastic (798 aa).

Residues 1–72 (MASLSTMHLI…SKVAGINRVA (72 aa)) constitute a chloroplast transit peptide. Residue K251 participates in substrate binding. Mg(2+) contacts are provided by D383 and D385. The DXDD motif signature appears at 383-386 (DIDD). Residue K469 coordinates substrate.

The protein belongs to the terpene synthase family. Tpsc subfamily. Requires Mg(2+) as cofactor. As to expression, highly expressed in roots, and, at low levels, in stems and leaves.

It is found in the plastid. Its subcellular location is the chloroplast. It carries out the reaction (2E,6E,10E)-geranylgeranyl diphosphate = (+)-copalyl diphosphate. It functions in the pathway secondary metabolite biosynthesis; terpenoid biosynthesis. Involved in the biosynthesis of ent-kaurene diterpenoids natural products such as oridonin, miltiradiene, eriocalyxin B and nezukol, known to exhibit antitumor, anti-inflammatory and antibacterial activities. Catalyzes the conversion of (2E,6E,10E)-geranylgeranyl diphosphate (GGPP) to (+)-copalyl diphosphate ((+)-CPP). The sequence is that of Copalyl diphosphate synthase 1, chloroplastic from Isodon rubescens (Rabdosia rubescens).